Reading from the N-terminus, the 174-residue chain is Peptide methionine sulfoxide reductase MsrA (174 aa).

Cysteine 10 is a catalytic residue.

This sequence belongs to the MsrA Met sulfoxide reductase family.

It catalyses the reaction L-methionyl-[protein] + [thioredoxin]-disulfide + H2O = L-methionyl-(S)-S-oxide-[protein] + [thioredoxin]-dithiol. The catalysed reaction is [thioredoxin]-disulfide + L-methionine + H2O = L-methionine (S)-S-oxide + [thioredoxin]-dithiol. In terms of biological role, has an important function as a repair enzyme for proteins that have been inactivated by oxidation. Catalyzes the reversible oxidation-reduction of methionine sulfoxide in proteins to methionine. In Pseudarthrobacter chlorophenolicus (strain ATCC 700700 / DSM 12829 / CIP 107037 / JCM 12360 / KCTC 9906 / NCIMB 13794 / A6) (Arthrobacter chlorophenolicus), this protein is Peptide methionine sulfoxide reductase MsrA.